A 378-amino-acid chain; its full sequence is Putative glutamate--cysteine ligase 2 (378 aa).

The protein belongs to the glutamate--cysteine ligase type 2 family. YbdK subfamily.

The catalysed reaction is L-cysteine + L-glutamate + ATP = gamma-L-glutamyl-L-cysteine + ADP + phosphate + H(+). In terms of biological role, ATP-dependent carboxylate-amine ligase which exhibits weak glutamate--cysteine ligase activity. This chain is Putative glutamate--cysteine ligase 2, found in Salinispora arenicola (strain CNS-205).